We begin with the raw amino-acid sequence, 221 residues long: HTH-type transcriptional regulator McbR (221 aa).

An HTH gntR-type domain is found at 10–77 (VSLTLQVEND…PAQAFTVPEV (68 aa)). Residues 37–56 (TKNLAEQLGMSITPVREALL) constitute a DNA-binding region (H-T-H motif).

In terms of biological role, important for biofilm formation. Represses expression of McbA by binding to its promoter region, which prevents colanic acid overproduction and mucoidy. The polypeptide is HTH-type transcriptional regulator McbR (mcbR) (Escherichia coli (strain K12)).